A 383-amino-acid polypeptide reads, in one-letter code: Carbamoyl phosphate synthase small chain (383 aa).

Residues 1 to 190 form a CPSase region; the sequence is MPHPSSRQAH…FDQRLKQHPD (190 aa). Positions 51, 242, and 244 each coordinate L-glutamine. The region spanning 194-381 is the Glutamine amidotransferase type-1 domain; sequence RVVAIDFGIK…VALMADRRDV (188 aa). C271 (nucleophile) is an active-site residue. Residues L272, Q275, N311, G313, and F314 each contribute to the L-glutamine site. Residues H354 and E356 contribute to the active site.

It belongs to the CarA family. In terms of assembly, composed of two chains; the small (or glutamine) chain promotes the hydrolysis of glutamine to ammonia, which is used by the large (or ammonia) chain to synthesize carbamoyl phosphate. Tetramer of heterodimers (alpha,beta)4.

It catalyses the reaction hydrogencarbonate + L-glutamine + 2 ATP + H2O = carbamoyl phosphate + L-glutamate + 2 ADP + phosphate + 2 H(+). The catalysed reaction is L-glutamine + H2O = L-glutamate + NH4(+). It participates in amino-acid biosynthesis; L-arginine biosynthesis; carbamoyl phosphate from bicarbonate: step 1/1. It functions in the pathway pyrimidine metabolism; UMP biosynthesis via de novo pathway; (S)-dihydroorotate from bicarbonate: step 1/3. Functionally, small subunit of the glutamine-dependent carbamoyl phosphate synthetase (CPSase). CPSase catalyzes the formation of carbamoyl phosphate from the ammonia moiety of glutamine, carbonate, and phosphate donated by ATP, constituting the first step of 2 biosynthetic pathways, one leading to arginine and/or urea and the other to pyrimidine nucleotides. The small subunit (glutamine amidotransferase) binds and cleaves glutamine to supply the large subunit with the substrate ammonia. This is Carbamoyl phosphate synthase small chain from Parasynechococcus marenigrum (strain WH8102).